The chain runs to 316 residues: MANLKEIRDRIKSVKNTRKITEAMRLVAAAKVRRAQEQVLRSRPFADRLARILENLQSRMRFEDASSPLMEQRDVETITLVSVTGDRGLCGGYNANIIKRTEQRFAELTGKGFKVKLVLIGNKAIGYFTKRDYPVQATFSGLEQVPTADEANTISTDVLAEFIGAGTDRVELIFTKFINLVSCKPVVQTLLPLDPQDIADPEDEIFRLTTKDGRLTVEPGAGPANTEPKIPSDIVFEQTPEQLLNALLPLYLQNQLLRSLQESAASELASRMTAMNNASDNAKELAKTLTLDYNKARQAAITQEILEVAGGAAAVG.

This sequence belongs to the ATPase gamma chain family. As to quaternary structure, F-type ATPases have 2 components, CF(1) - the catalytic core - and CF(0) - the membrane proton channel. CF(1) has five subunits: alpha(3), beta(3), gamma(1), delta(1), epsilon(1). CF(0) has three main subunits: a, b and c.

The protein resides in the cellular thylakoid membrane. Its function is as follows. Produces ATP from ADP in the presence of a proton gradient across the membrane. The gamma chain is believed to be important in regulating ATPase activity and the flow of protons through the CF(0) complex. The chain is ATP synthase gamma chain from Parasynechococcus marenigrum (strain WH8102).